A 292-amino-acid chain; its full sequence is Insulin-like growth factor-binding protein 3 (292 aa).

Positions 1–27 (MHPARPALWAAALTALTLLRGPPVARA) are cleaved as a signal peptide. The IGFBP N-terminal domain occupies 36 to 119 (PVVRCEPCDA…LNGRGFCANA (84 aa)). 6 disulfide bridges follow: Cys40–Cys69, Cys43–Cys71, Cys51–Cys72, Cys60–Cys75, Cys83–Cys96, and Cys90–Cys116. 3 N-linked (GlcNAc...) asparagine glycosylation sites follow: Asn118, Asn124, and Asn137. Disordered regions lie at residues 127-161 (AYLP…THRV) and 191-211 (YESQ…ETEY). A compositionally biased stretch (polar residues) spans 129-139 (LPSQPSPGNTT). The residue at position 149 (Ser149) is a Phosphoserine. Residues 192–203 (ESQSTDTQNFSS) show a composition bias toward polar residues. Asn200 carries N-linked (GlcNAc...) asparagine glycosylation. Ser202 is modified (phosphoserine). A Thyroglobulin type-1 domain is found at 211-286 (YGPCRREMED…DTKGKDDVHC (76 aa)). 3 cysteine pairs are disulfide-bonded: Cys214–Cys241, Cys252–Cys263, and Cys265–Cys286.

In terms of assembly, interacts with XLKD1. Binds IGF2 more than IGF1. Forms a ternary complex of about 140 to 150 kDa with IGF1 or IGF2 and a 85 kDa glycoprotein (ALS). Interacts with humanin; humanin competes with importin KPNB1 for binding to IGFBP3, blocking IGFBP3 nuclear import and IGFBP3-mediated apoptosis. Interacts with TMEM219. Interacts with RXRA; this interaction modulates the transcriptional activity of RXRA. Interacts with LRP1; this interaction mediates cell growth inhibition independent of IGF1. In terms of processing, phosphorylated by FAM20C in the extracellular medium. Phosphorylated by CK2; resulting in decreased nuclear localization.

It localises to the secreted. The protein localises to the nucleus. Multifunctional protein that plays a critical role in regulating the availability of IGFs such as IGF1 and IGF2 to their receptors and thereby regulates IGF-mediated cellular processes including proliferation, differentiation, and apoptosis in a cell-type specific manner. Also exhibits IGF-independent antiproliferative and apoptotic effects mediated by its receptor TMEM219/IGFBP-3R. Inhibits the positive effect of humanin on insulin sensitivity. Promotes testicular germ cell apoptosis. Acts via LRP-1/alpha2M receptor, also known as TGF-beta type V receptor, to mediate cell growth inhibition independent of IGF1. Mechanistically, induces serine-specific dephosphorylation of IRS1 or IRS2 upon ligation to its receptor, leading to the inhibitory cascade. In the nucleus, interacts with transcription factors such as retinoid X receptor-alpha/RXRA to regulate transcriptional signaling and apoptosis. The protein is Insulin-like growth factor-binding protein 3 (Igfbp3) of Rattus norvegicus (Rat).